The primary structure comprises 364 residues: Methylthioribose-1-phosphate isomerase (364 aa).

Substrate is bound by residues 53–55 (RGA), arginine 90, and glutamine 200. Aspartate 241 functions as the Proton donor in the catalytic mechanism. Residue 251–252 (NK) coordinates substrate.

It belongs to the eIF-2B alpha/beta/delta subunits family. MtnA subfamily.

It carries out the reaction 5-(methylsulfanyl)-alpha-D-ribose 1-phosphate = 5-(methylsulfanyl)-D-ribulose 1-phosphate. It functions in the pathway amino-acid biosynthesis; L-methionine biosynthesis via salvage pathway; L-methionine from S-methyl-5-thio-alpha-D-ribose 1-phosphate: step 1/6. Functionally, catalyzes the interconversion of methylthioribose-1-phosphate (MTR-1-P) into methylthioribulose-1-phosphate (MTRu-1-P). The sequence is that of Methylthioribose-1-phosphate isomerase from Methylobacterium nodulans (strain LMG 21967 / CNCM I-2342 / ORS 2060).